The primary structure comprises 292 residues: 2,3-dihydroxybenzoate decarboxylase (292 aa).

C263 is a catalytic residue.

The protein belongs to the metallo-dependent hydrolases superfamily. As to quaternary structure, homotetramer.

The catalysed reaction is 2,3-dihydroxybenzoate + H(+) = catechol + CO2. The protein operates within aromatic compound metabolism; benzoate degradation via hydroxylation. The polypeptide is 2,3-dihydroxybenzoate decarboxylase (Aspergillus niger).